Consider the following 1692-residue polypeptide: MGQKTIKRKIQSAERPAEADVAFLASTQHSKDLCYEYDAPEEVAVEEPVDETPAPETAPERPPLSRAKTAAVKPQETAAPTTATIADVPLSAEEIVRALVARKLKKPILSIPTSKSVKELCNGKSTLQNEIVGDFHSEFTNLPDRPEDIPLKELVPASQSLMLGRVSSALLSKLVSSKMPARFNADAIGKYLASKWGLGPLRSVAVMLFAIAAEPEARLGSVAAAEKYLDDTAAKYAEWAGITLQERSTQSSAGGGGSSGTVDPTVLAELTKTNTRLAKRQFQALAEYLQVDLMKPSSEQESEALAVELQQKLDAWTAEFSEEFLAGVAPTFSEKKSRRYNAWWNAARQDVLALFSGNLQEDLSRDAAALEAFLDRLSNRAGESLLAMTRSLSRRNQANAIPGLTDIARRAEKAISSCIDRPATAKVHLPATRPRTTVSDEGDIKFNEVPRPDVSGHAAYADVLQAKDLNGHPAAARFVSLKSAHSHTDLTNGMLDRIRTALDSGMSFAGKNILITGAGQGSIGAEVVRILLTGGARVIVTTSREPSSTAKYFQQMYEESGAKGSELILTRFNQASAKDCENLVDHIYDSSGLDRDLDAVLPFAAAPEGGTEIQDVGAKNELVHRLMLASVFRMLGRVIKNKRDRSIDCHPTQVLLPLSPNHGTFGGDGMYAESKLGLESLVNRVQSESWSDELAICGVKIGWTRGTGLMNANDIVAEAIEDHGVLTFSVQEMAFNIAMLMTPELVDLCENAPLMADFGGGLSALEDCAKILSAARTEINTAADVARAVKAEDDLERAASRTLPAPSSTSPVAKKSMLRIGFPRLPDFELELSPLEHLRDIKDPSETVVVVGFSELGPWGSARLRWEIESKGDFSQVGYMEMAWMMDLIKHVDGPTKNGYYVGWVDSKTGESVHDAEIEARYGEVIRKHSGIRFVDPEGSAGYDPSKKEYLHEVAVEEDLPEFEASSATAEAFRLRHGTNVSISPIEGTENCRVQVKRGASIKIPKSVPFTWGSVAGQLPKGWSPKKYGIPEDLIPQLDPVSLYTICCVAEAFYSAGITDPLEIFKYIHLSEIGNFLGSSMGGALKTRQMYRDIYLDKDIQSDVLQETYLNTTGAWVNMLLLGSTGPIKTPMGACATGVESIDSAFESIMSDKTRMCIVGGFDDFHEDESYGFSTMKATVNVEEELAKGRLPSEMSRPTAESRSGFVEAHGCGVQILCRGDVALEMGLPVYGIIAGSTMAADKVGRSVPAPGQGILTFARETGQAQLDKSSPSTNTTSRTSSVSLARRGATVSPLRASLDAWGLTIDDLDVASLHGTSTKANDLNEPEVICKQMDHLGRTPGRPLWAICQKSVTGHPKAPAAAWMLNGCLQVMDSRTIPANRNADNVDPALQTATHLCFPTRPVRVQDVRAFILTSFGFGQKGGQVVGVAPKYFFATLDEEVYKDYSVRVTKRSKTADRAYAKALMSNAIVKVQDHSPYEQEDQSRIFMDPLSRITEDAETGSYHFDTKDIRNVADVKARLTRLVRGERLNARPDAASGLAQAARSAQAWIEKQTGGRSSVDTSTVGIDLVDLSAFSAHENETFIERNFTEQEKAFAKQSLDQKMAFASRWAAKEAVFKCLHTQTKGAGAAMKDIEIVKSDNAPKVKLHNDCIKAGRKAGLEDIQLSISHGEDCLIAVAIGIAGNGPAKYTL.

Residues Ala44–Pro80 are disordered. The region spanning Leu90–Leu174 is the Carrier domain. Position 125 is an O-(pantetheine 4'-phosphoryl)serine (Ser125). The ketoreductase (KR) domain stretch occupies residues Phe508–Val746. The Ketosynthase family 3 (KS3) domain maps to Lys948–Ala1430. Cys1135 (for beta-ketoacyl synthase activity) is an active-site residue. A disordered region spans residues Gly1263–Arg1287. Residues Ser1270–Ser1284 are compositionally biased toward low complexity. Catalysis depends on for beta-ketoacyl synthase activity residues His1315 and His1356. Residue Asp1569 coordinates Mg(2+). Acetyl-CoA-binding positions include Asp1569 to Val1571, Glu1615 to Thr1625, Lys1639 to Asn1642, and Ile1668 to His1670. Ser1669 serves as a coordination point for Mg(2+).

The protein belongs to the thiolase-like superfamily. Fungal fatty acid synthetase subunit alpha family. [Alpha(6)beta(6)] hexamers of two multifunctional subunits (alpha and beta). 4'-phosphopantetheine is transferred from CoA to a specific serine of the acyl carrier domain by the C-terminal PPT domain. This modification is essential for activity because fatty acids are bound in thioester linkage to the sulfhydryl of the prosthetic group.

It catalyses the reaction acetyl-CoA + n malonyl-CoA + 2n NADPH + 4n H(+) = a long-chain-acyl-CoA + n CoA + n CO2 + 2n NADP(+).. It carries out the reaction a fatty acyl-[ACP] + malonyl-[ACP] + H(+) = a 3-oxoacyl-[ACP] + holo-[ACP] + CO2. The enzyme catalyses a (3R)-hydroxyacyl-[ACP] + NADP(+) = a 3-oxoacyl-[ACP] + NADPH + H(+). It participates in mycotoxin biosynthesis. Fatty acid synthase alpha subunit; part of the fragmented gene cluster that mediates the biosynthesis of dothistromin (DOTH), a polyketide toxin very similar in structure to the aflatoxin precursor, versicolorin B. The first step of the pathway is the conversion of acetate to norsolorinic acid (NOR) and requires the fatty acid synthase subunits hexA and hexB, as well as the polyketide synthase pksA. PksA combines a hexanoyl starter unit and 7 malonyl-CoA extender units to synthesize the precursor NOR. The hexanoyl starter unit is provided to the acyl-carrier protein (ACP) domain by the fungal fatty acid synthase hexA/hexB. The second step is the conversion of NOR to averantin (AVN) and requires the norsolorinic acid ketoreductase nor1, which catalyzes the dehydration of norsolorinic acid to form (1'S)-averantin. The cytochrome P450 monooxygenase avnA then catalyzes the hydroxylation of AVN to 5'hydroxyaverantin (HAVN). The next step is performed by adhA that transforms HAVN to averufin (AVF). Averufin might then be converted to hydroxyversicolorone by cypX and avfA. Hydroxyversicolorone is further converted versiconal hemiacetal acetate (VHA) by moxY. VHA is then the substrate for the versiconal hemiacetal acetate esterase est1 to yield versiconal (VAL). Versicolorin B synthase vbsA then converts VAL to versicolorin B (VERB) by closing the bisfuran ring. Then, the activity of the versicolorin B desaturase verB leads to versicolorin A (VERA). DotB, a predicted chloroperoxidase, may perform epoxidation of the A-ring of VERA. Alternatively, a cytochrome P450, such as cypX or avnA could catalyze this step. It is also possible that another, uncharacterized, cytochrome P450 enzyme is responsible for this step. Opening of the epoxide could potentially be achieved by the epoxide hydrolase epoA. However, epoA seems not to be required for DOTH biosynthesis, but other epoxide hydrolases may have the ability to complement this hydrolysis. Alternatively, opening of the epoxide ring could be achieved non-enzymatically. The next step is the deoxygenation of ring A to yield the 5,8-dihydroxyanthraquinone which is most likely catalyzed by the NADPH dehydrogenase encoded by ver1. The last stages of DOTH biosynthesis are proposed to involve hydroxylation of the bisfuran. OrdB and norB might have oxidative roles here. An alternative possibility is that cytochrome P450 monoogenases such as avnA and cypX might perform these steps in addition to previously proposed steps. The polypeptide is Fatty acid synthase alpha subunit hexA (Dothistroma septosporum (strain NZE10 / CBS 128990) (Red band needle blight fungus)).